The chain runs to 536 residues: Transcriptional regulator RPN4 (536 aa).

Composition is skewed to low complexity over residues 154–181 (QEQQ…QQQQ) and 361–370 (SPSAISPASP). Disordered regions lie at residues 154 to 196 (QEQQ…TRRR), 353 to 375 (VFDQ…SDDM), and 393 to 434 (EEIN…AEIT). Residues 393-411 (EEINKKHSKSGKKESKSQK) are compositionally biased toward basic and acidic residues. Residues 440-471 (HQCNLINPSTGEPCNKQFSRPYDLIRHQDTIH) form a C2H2-type zinc finger.

The protein resides in the nucleus. Its function is as follows. Transcriptional activator of a number of genes encoding proteasomal subunits. Binds to the DNA sequence 5'-GAAGGCAAAA-3', enriched in regions upstream of proteasome genes. The polypeptide is Transcriptional regulator RPN4 (RPN4) (Candida albicans (strain SC5314 / ATCC MYA-2876) (Yeast)).